Consider the following 684-residue polypeptide: Galactocerebrosidase (684 aa).

The signal sequence occupies residues 1-42; it reads MANSQPKASQQRQAKVMTAAAGSASRVAVPLLLCALLVPGGA. 3 residues coordinate substrate: T109, W151, and N197. E198 serves as the catalytic Proton donor/acceptor. E274 functions as the Nucleophile in the catalytic mechanism. C287 and C394 are oxidised to a cystine. N-linked (GlcNAc...) asparagine glycosylation is found at N300 and N379. R396 contacts substrate. N-linked (GlcNAc...) asparagine glycosylation is found at N403, N558, N601, and N645.

This sequence belongs to the glycosyl hydrolase 59 family. Detected in brain and kidney.

It localises to the lysosome. It carries out the reaction a beta-D-galactosyl-(1&lt;-&gt;1')-N-acylsphing-4-enine + H2O = an N-acylsphing-4-enine + D-galactose. The catalysed reaction is a D-galactosylceramide + H2O = an N-acyl-sphingoid base + D-galactose. It catalyses the reaction beta-D-galactosyl-(1&lt;-&gt;1)-sphing-4-enine + H2O = sphing-4-enine + D-galactose. Hydrolyzes the galactose ester bonds of glycolipids such as galactosylceramide and galactosylsphingosine. Enzyme with very low activity responsible for the lysosomal catabolism of galactosylceramide, a major lipid in myelin, kidney and epithelial cells of small intestine and colon. In Mus musculus (Mouse), this protein is Galactocerebrosidase.